The primary structure comprises 454 residues: Phosphoglucosamine mutase (454 aa).

Ser-101 acts as the Phosphoserine intermediate in catalysis. Mg(2+) contacts are provided by Ser-101, Asp-243, Asp-245, and Asp-247. Residue Ser-101 is modified to Phosphoserine.

This sequence belongs to the phosphohexose mutase family. Mg(2+) serves as cofactor. In terms of processing, activated by phosphorylation.

It catalyses the reaction alpha-D-glucosamine 1-phosphate = D-glucosamine 6-phosphate. Catalyzes the conversion of glucosamine-6-phosphate to glucosamine-1-phosphate. The protein is Phosphoglucosamine mutase of Citrifermentans bemidjiense (strain ATCC BAA-1014 / DSM 16622 / JCM 12645 / Bem) (Geobacter bemidjiensis).